An 871-amino-acid chain; its full sequence is DNA mismatch repair protein MutS (871 aa).

616–623 is an ATP binding site; it reads GPNMAGKS. The interval 801 to 825 is disordered; that stretch reads ETEKTEESMEGTNLPKKKKEEKTSS.

The protein belongs to the DNA mismatch repair MutS family.

This protein is involved in the repair of mismatches in DNA. It is possible that it carries out the mismatch recognition step. This protein has a weak ATPase activity. The sequence is that of DNA mismatch repair protein MutS from Clostridium kluyveri (strain NBRC 12016).